The primary structure comprises 174 residues: Actin-related protein 2/3 complex subunit 3 (174 aa).

The protein belongs to the ARPC3 family. As to quaternary structure, component of the Arp2/3 complex composed of arp2, act2, arc1/p41-ARC, arc2/p34-ARC, arc3/p21-ARC, arc4/p20-ARC and arc5/p16-ARC.

It localises to the cytoplasm. Its subcellular location is the cytoskeleton. It is found in the actin patch. In terms of biological role, functions as a component of the Arp2/3 complex which is involved in regulation of actin polymerization and together with an activating nucleation-promoting factor (NPF) mediates the formation of branched actin networks. The chain is Actin-related protein 2/3 complex subunit 3 (arc3) from Schizosaccharomyces pombe (strain 972 / ATCC 24843) (Fission yeast).